The following is a 217-amino-acid chain: Imidazole glycerol phosphate synthase subunit HisH (217 aa).

The Glutamine amidotransferase type-1 domain occupies 5–217 (RVGIINYGVG…LRLLANFLTL (213 aa)). Cys93 serves as the catalytic Nucleophile. Catalysis depends on residues His199 and Glu201.

In terms of assembly, heterodimer of HisH and HisF.

The protein resides in the cytoplasm. The catalysed reaction is 5-[(5-phospho-1-deoxy-D-ribulos-1-ylimino)methylamino]-1-(5-phospho-beta-D-ribosyl)imidazole-4-carboxamide + L-glutamine = D-erythro-1-(imidazol-4-yl)glycerol 3-phosphate + 5-amino-1-(5-phospho-beta-D-ribosyl)imidazole-4-carboxamide + L-glutamate + H(+). The enzyme catalyses L-glutamine + H2O = L-glutamate + NH4(+). It participates in amino-acid biosynthesis; L-histidine biosynthesis; L-histidine from 5-phospho-alpha-D-ribose 1-diphosphate: step 5/9. In terms of biological role, IGPS catalyzes the conversion of PRFAR and glutamine to IGP, AICAR and glutamate. The HisH subunit catalyzes the hydrolysis of glutamine to glutamate and ammonia as part of the synthesis of IGP and AICAR. The resulting ammonia molecule is channeled to the active site of HisF. In Helicobacter hepaticus (strain ATCC 51449 / 3B1), this protein is Imidazole glycerol phosphate synthase subunit HisH.